The sequence spans 355 residues: Epoxide hydrolase 2 (355 aa).

The AB hydrolase-1 domain maps to 78-323; sequence VLLMVHGFPE…IRGASHWVQQ (246 aa). Aspartate 152 acts as the Nucleophile in catalysis. Tyrosine 263 serves as the catalytic Proton donor. Histidine 319 acts as the Proton acceptor in catalysis.

Belongs to the AB hydrolase superfamily. Epoxide hydrolase family.

The catalysed reaction is an epoxide + H2O = an ethanediol. It functions in the pathway lipid metabolism. Functionally, catalyzes the hydrolysis of epoxide-containing fatty acids. Active in vitro against trans-1,3-diphenylpropene oxide (t-DPPO), epoxyeicosatrienoic acids (EETs) including 8,9-EET, 11,12-EET and 14,15-EET and the linoleic acid metabolites 12,13-epoxy-9-octadecenoate (12,13-EpOME) and 9,10-epoxy-12-octadecenoate (9,10-EpOME). This chain is Epoxide hydrolase 2, found in Caenorhabditis elegans.